A 166-amino-acid chain; its full sequence is Kelch repeat protein B10 (166 aa).

Kelch repeat units follow at residues 25 to 76 (TIFV…STFG) and 77 to 129 (MLYF…KLNN).

The protein belongs to the poxviruses Kelch family.

The chain is Kelch repeat protein B10 from Oryctolagus cuniculus (Rabbit).